The following is a 773-amino-acid chain: E3 ubiquitin-protein ligase msl-2 (773 aa).

Cys41, Cys44, Cys59, His61, Cys64, Cys67, Cys78, and Cys84 together coordinate Zn(2+). Residues 41–85 form an RING-type zinc finger; it reads CVVCCQLLVDPYSPKGKRCQHNVCRLCLRGKKHLFPSCTQCEGCS. Residues 424–468 adopt a coiled-coil conformation; the sequence is VQTELQDAESLQKDFEDAKAAAEEAKEKEKDLHAISAELQKEDSD. Positions 460–525 are disordered; it reads AELQKEDSDE…EKVKPPKPKC (66 aa). Positions 520-571 constitute a CXC MSL2-type domain; sequence PPKPKCRCGISGSSNTLTTCRNSRCPCYKSYNSCAGCHCVCCKNPHKEDYVE. 9 residues coordinate Zn(2+): Cys525, Cys527, Cys539, Cys544, Cys546, Cys553, Cys556, Cys558, and Cys561. Residues 571-773 are C-terminal disordered region (CTD); the sequence is ESDEDDDLED…EEIMSGSDDL (203 aa). The span at 572 to 581 shows a compositional bias: acidic residues; the sequence is SDEDDDLEDF. Residues 572-616 are disordered; the sequence is SDEDDDLEDFEMPKDVPEPMTQSEEPVVAEPRQEENSMAPPDSSA. Positions 620–685 are clamp-binding domain (CBD); the sequence is LVPLNNLQQS…SLPQYAYIMP (66 aa). A pro/Bas region region spans residues 650–708; it reads QGSKPLDPVTVGFTIRVQLQHTDGFGSLPQYAYIMPTIDPPNPPAPSLSPPPPPAPDRE. A compositionally biased stretch (pro residues) spans 687–704; the sequence is IDPPNPPAPSLSPPPPPA. The interval 687-773 is disordered; the sequence is IDPPNPPAPS…EEIMSGSDDL (87 aa). Positions 705–714 are enriched in basic and acidic residues; the sequence is PDREVIEPPA. The segment covering 715-726 has biased composition (basic residues); it reads KKFRTSRTRRGR. The segment covering 742–759 has biased composition (polar residues); sequence GSRSNSAAGDRSSATDNA.

Belongs to the MSL2 family. As to quaternary structure, component of the male-specific lethal (MSL) histone acetyltransferase complex, composed of mof, mle, msl-1, msl-2 and msl-3 proteins, as well as roX1 and roX2 non-coding RNAs. When not associated with chromatin, the MSL complex associates with msl-2 mRNAs, possibly to regulate the amount of available MSL complex. Interacts with Clamp; promoting cooperative binding to DNA PionX sites and recruitment of the MSL complex to chromatin. Post-translationally, autoubiquitinated.

Its subcellular location is the nucleus. It localises to the chromosome. It catalyses the reaction S-ubiquitinyl-[E2 ubiquitin-conjugating enzyme]-L-cysteine + [acceptor protein]-L-lysine = [E2 ubiquitin-conjugating enzyme]-L-cysteine + N(6)-ubiquitinyl-[acceptor protein]-L-lysine.. It functions in the pathway protein modification; protein ubiquitination. Its function is as follows. Limiting component of the male-specific lethal (MSL) histone acetyltransferase complex, a multiprotein complex essential for elevating transcription of the single X chromosome in the male (X chromosome dosage compensation). The MSL complex specifically associates with the single X chromosome in males and mediates formation of H4K16ac, promoting a two-fold activation of X chromosome. Msl-2 is only produced in males, constituting the limiting component of the MSL complex. Within the MSL complex, msl-2 mediates the selective binding to the X chromosome and recruitment of the MSL complex via two different mechanisms. Recognizes DNA motifs that are enriched on X chromosome, named PionX sites, which are characterized by sequence features and distinct DNA conformation (base roll). Specific recognition of the X chromosome is also mediated by the formation of a gel-like state: msl-2 undergoes liquid-liquid phase separation upon binding to roX1 and roX2 non-coding RNAs, leading to nucleate the MSL complex on the X chromosome. Msl-2 is also required for translation and/or stability of msl-1 in males. Also acts as an E3 ubiquitin ligase: in complex with msl-1, mediates ubiquitination of histone H2B at 'Lys-34' (H2BK34Ub). Also catalyzes ubiquitination of msl-1, msl-3 and mof components of the MSL complex. The polypeptide is E3 ubiquitin-protein ligase msl-2 (Drosophila melanogaster (Fruit fly)).